We begin with the raw amino-acid sequence, 80 residues long: MAVKKPENLTFEAAIEELDSVVNQLESGDLPLEDALKKFERGISLARAGQEKLTQAEQRVDILLQADDNAELTPFDANDD.

Belongs to the XseB family. In terms of assembly, heterooligomer composed of large and small subunits.

The protein resides in the cytoplasm. It catalyses the reaction Exonucleolytic cleavage in either 5'- to 3'- or 3'- to 5'-direction to yield nucleoside 5'-phosphates.. Functionally, bidirectionally degrades single-stranded DNA into large acid-insoluble oligonucleotides, which are then degraded further into small acid-soluble oligonucleotides. This is Exodeoxyribonuclease 7 small subunit from Aliivibrio salmonicida (strain LFI1238) (Vibrio salmonicida (strain LFI1238)).